A 303-amino-acid polypeptide reads, in one-letter code: UDP-3-O-acyl-N-acetylglucosamine deacetylase (303 aa).

Residues histidine 78, histidine 237, and aspartate 241 each contribute to the Zn(2+) site. The active-site Proton donor is histidine 264.

Belongs to the LpxC family. Zn(2+) is required as a cofactor.

The enzyme catalyses a UDP-3-O-[(3R)-3-hydroxyacyl]-N-acetyl-alpha-D-glucosamine + H2O = a UDP-3-O-[(3R)-3-hydroxyacyl]-alpha-D-glucosamine + acetate. It functions in the pathway glycolipid biosynthesis; lipid IV(A) biosynthesis; lipid IV(A) from (3R)-3-hydroxytetradecanoyl-[acyl-carrier-protein] and UDP-N-acetyl-alpha-D-glucosamine: step 2/6. In terms of biological role, catalyzes the hydrolysis of UDP-3-O-myristoyl-N-acetylglucosamine to form UDP-3-O-myristoylglucosamine and acetate, the committed step in lipid A biosynthesis. The protein is UDP-3-O-acyl-N-acetylglucosamine deacetylase of Xanthomonas campestris pv. campestris (strain 8004).